The following is a 369-amino-acid chain: 3-dehydroquinate synthase (369 aa).

Residues 75-80, 109-113, 133-134, Lys146, Lys155, and 173-176 each bind NAD(+); these read DGEEHK, GVIGD, TT, and TLKT. 3 residues coordinate Zn(2+): Glu188, His251, and His268.

Belongs to the sugar phosphate cyclases superfamily. Dehydroquinate synthase family. The cofactor is Co(2+). Requires Zn(2+) as cofactor. NAD(+) serves as cofactor.

Its subcellular location is the cytoplasm. The enzyme catalyses 7-phospho-2-dehydro-3-deoxy-D-arabino-heptonate = 3-dehydroquinate + phosphate. The protein operates within metabolic intermediate biosynthesis; chorismate biosynthesis; chorismate from D-erythrose 4-phosphate and phosphoenolpyruvate: step 2/7. Catalyzes the conversion of 3-deoxy-D-arabino-heptulosonate 7-phosphate (DAHP) to dehydroquinate (DHQ). This Legionella pneumophila subsp. pneumophila (strain Philadelphia 1 / ATCC 33152 / DSM 7513) protein is 3-dehydroquinate synthase.